Reading from the N-terminus, the 159-residue chain is Ribosome maturation factor RimP (159 aa).

The protein belongs to the RimP family.

Its subcellular location is the cytoplasm. Required for maturation of 30S ribosomal subunits. This is Ribosome maturation factor RimP from Halothermothrix orenii (strain H 168 / OCM 544 / DSM 9562).